A 278-amino-acid chain; its full sequence is Glucosamine-6-phosphate deaminase (278 aa).

The active-site Proton acceptor; for enolization step is aspartate 72. Catalysis depends on aspartate 141, which acts as the For ring-opening step. Histidine 143 serves as the catalytic Proton acceptor; for ring-opening step. The active-site For ring-opening step is glutamate 148.

It belongs to the glucosamine/galactosamine-6-phosphate isomerase family. In terms of assembly, homohexamer.

Its subcellular location is the cytoplasm. It carries out the reaction alpha-D-glucosamine 6-phosphate + H2O = beta-D-fructose 6-phosphate + NH4(+). It functions in the pathway nucleotide-sugar biosynthesis; UDP-N-acetyl-alpha-D-glucosamine biosynthesis; alpha-D-glucosamine 6-phosphate from D-fructose 6-phosphate: step 1/1. Its function is as follows. Catalyzes the reversible conversion of alpha-D-glucosamine 6-phosphate (GlcN-6P) into beta-D-fructose 6-phosphate (Fru-6P) and ammonium ion, a regulatory reaction step in de novo uridine diphosphate-N-acetyl-alpha-D-glucosamine (UDP-GlcNAc) biosynthesis via hexosamine pathway. This chain is Glucosamine-6-phosphate deaminase (Gnpda1), found in Aedes aegypti (Yellowfever mosquito).